The chain runs to 213 residues: Na(+)-translocating NADH-quinone reductase subunit D (213 aa).

7 consecutive transmembrane segments (helical) span residues 21-41 (PLIA…VNTA), 42-62 (LTMG…VSLL), 77-97 (IIIS…FFDI), 101-121 (LSVF…AESL), 131-151 (FLDG…VSII), 153-173 (EFFG…FYAS), and 183-203 (FGLM…IWGV).

This sequence belongs to the NqrDE/RnfAE family. Composed of six subunits; NqrA, NqrB, NqrC, NqrD, NqrE and NqrF.

The protein localises to the cell inner membrane. The catalysed reaction is a ubiquinone + n Na(+)(in) + NADH + H(+) = a ubiquinol + n Na(+)(out) + NAD(+). In terms of biological role, NQR complex catalyzes the reduction of ubiquinone-1 to ubiquinol by two successive reactions, coupled with the transport of Na(+) ions from the cytoplasm to the periplasm. NqrA to NqrE are probably involved in the second step, the conversion of ubisemiquinone to ubiquinol. This Chlamydia abortus (strain DSM 27085 / S26/3) (Chlamydophila abortus) protein is Na(+)-translocating NADH-quinone reductase subunit D.